Here is a 316-residue protein sequence, read N- to C-terminus: Methionyl-tRNA formyltransferase (316 aa).

117-120 is a (6S)-5,6,7,8-tetrahydrofolate binding site; that stretch reads SLLP.

It belongs to the Fmt family.

It catalyses the reaction L-methionyl-tRNA(fMet) + (6R)-10-formyltetrahydrofolate = N-formyl-L-methionyl-tRNA(fMet) + (6S)-5,6,7,8-tetrahydrofolate + H(+). Attaches a formyl group to the free amino group of methionyl-tRNA(fMet). The formyl group appears to play a dual role in the initiator identity of N-formylmethionyl-tRNA by promoting its recognition by IF2 and preventing the misappropriation of this tRNA by the elongation apparatus. This is Methionyl-tRNA formyltransferase from Janthinobacterium sp. (strain Marseille) (Minibacterium massiliensis).